The following is a 338-amino-acid chain: Electron transfer flavoprotein subunit alpha (338 aa).

Isoleucine 275 to aspartate 303 lines the FAD pocket.

It belongs to the ETF alpha-subunit/FixB family. Heterodimer of an alpha and a beta subunit. It depends on FAD as a cofactor.

In terms of biological role, the electron transfer flavoprotein serves as a specific electron acceptor for other dehydrogenases. It transfers the electrons to the main respiratory chain via ETF-ubiquinone oxidoreductase (ETF dehydrogenase). This is Electron transfer flavoprotein subunit alpha (etfA) from Megasphaera elsdenii.